The primary structure comprises 521 residues: Cell adhesion molecule CEACAM1 (521 aa).

The N-terminal stretch at 1 to 34 (MELASAHLHKGQVPWGGLLLTASLLASWSPATTA) is a signal peptide. The region spanning 35 to 142 (EVTIEAVPPQ…QATVRFHVHP (108 aa)) is the Ig-like V-type domain. The Extracellular portion of the chain corresponds to 35–428 (EVTIEAVPPQ…GGLSDGAIAG (394 aa)). The interval 39–142 (EAVPPQVAED…QATVRFHVHP (104 aa)) is required for homophilic binding. Asn-71, Asn-89, Asn-104, Asn-148, Asn-152, Asn-199, Asn-206, Asn-210, Asn-226, Asn-258, Asn-290, Asn-294, Asn-304, Asn-317, Asn-333, and Asn-375 each carry an N-linked (GlcNAc...) asparagine glycan. Ig-like C2-type domains follow at residues 147 to 234 (PNIT…FSLN), 239 to 319 (PDTP…KNIT), and 323 to 411 (PVTQ…IKLD). The cysteines at positions 167 and 217 are disulfide-linked. Cys-261 and Cys-301 are joined by a disulfide. An intrachain disulfide couples Cys-346 to Cys-394. Residues 429–447 (IVIGVVAGVALIAGLAYFL) form a helical membrane-spanning segment. The interaction with calmodulin stretch occupies residues 445–457 (YFLYSRKSGGGSD). The tract at residues 447–521 (LYSRKSGGGS…ETVYSEVKKK (75 aa)) is interaction with FLNA. Topologically, residues 448–521 (YSRKSGGGSD…ETVYSEVKKK (74 aa)) are cytoplasmic. The tract at residues 455–521 (GSDQRDLTEH…ETVYSEVKKK (67 aa)) is disordered. Residues 457–466 (DQRDLTEHKP) show a composition bias toward basic and acidic residues. Over residues 467 to 481 (STSNHNLAPSDNSPN) the composition is skewed to polar residues. The tract at residues 484-521 (DDVAYTVLNFNSQQPNRPTSAPSSPRATETVYSEVKKK) is required for interaction with PTPN11 and PTPN6 and for control of phosphorylation level. Tyr-488 carries the phosphotyrosine; by SRC, LCK, INSR and EGFR modification. Residues 491–514 (LNFNSQQPNRPTSAPSSPRATETV) are compositionally biased toward polar residues. A Phosphoserine modification is found at Ser-503. Tyr-515 carries the post-translational modification Phosphotyrosine; by INSR, SRC and LCK. The essential for interaction with PTPN11 and PTPN6 stretch occupies residues 515 to 518 (YSEV).

Belongs to the immunoglobulin superfamily. CEA family. (Microbial infection) Interacts with MHV S1 spike glycoprotein. In terms of assembly, monomer. Oligomer. Heterodimer. Homodimer. Cis-dimer/oligomer (via Ig-like C2-type and/or via cytoplasmic domains); induced by trans-homophilic cell adhesion through an allosteric mechanism transmitted by the Ig-like V-type domain, and is regulated by intracellular calcium and calmodulin. Interacts (via cytoplasmic domain) with calmodulin in a calcium dependent manner; reduces homophilic cell adhesion through dissociation of dimer. Isoform 1 interacts (via cytoplasmic domain) with PTPN11 (preferentially) and PTPN6; cis-homodimer form is preferred; this interaction is decreased by formation of isoform 1 / isoform 2 cis-heterodimers and is dependent on the monomer/dimer equilibrium; this interaction is phosphorylation-dependent. Isoform 1 interacts with LYN. Isoform 1 interacts (via cytoplasmic domain) with SRC (via SH2 domain); this interaction is regulated by trans-homophilic cell adhesion. Isoform 1 interacts with LCK; mediates phosphorylation at Tyr-488 and Tyr-515 resulting in PTPN6 association. Isoform 1 interacts with PTPN6; this interaction is phosphorylation-dependent and causes a profound decrease in TCR stimulation-induced CD247 and ZAP70 phosphorylation. Isoform 1 interacts with TCR/CD3 complex through TCR beta chain and CD3E; colocalizes at the cell surface and upon stimulation of the TCR/CD3 complex recruits PTPN6 in the TCR/CD3 complex, resulting in dephosphorylation of CD247 and ZAP70. Isoform 1 interacts (via cytoplasmic domain) with SHC1 (via SH2 domain); SHC1 mediates interaction with INSR or EGFR in a Ser-503 phosphorylation-dependent manner. Isoform 1 interacts with EGFR; the interaction is indirect. Isoform 1 interacts with CSF3R; down-regulates the CSF3R-STAT3 pathway through recruitment of PTPN6 that dephosphorylates CSF3R. Isoform 1 (phosphorylated form) interacts with TLR4 and SYK; recruits PTPN6 that dephosphorylates SYK, reducing the production of reactive oxygen species (ROS) and lysosome disruption, leading to a reduction of the inflammasome activity. Isoform 1 interacts with FLNA; inhibits cell migration and cell scattering by interfering with the interaction of FLNA with RALA. Isoform 1 interacts (via cytoplasmic domain) with PXN; the interaction is phosphotyrosyl-dependent. Isoform 1 interacts with KLRK1; recruits PTPN6 that dephosphorylates VAV1. Isoform 1 interacts with CEACAM8. Isoform 1 interacts with FASN; this interaction is insulin and phosphorylation-dependent; reduces fatty-acid synthase activity. Interacts (via Ig-like V-type) with HAVCR2 (via Ig-like V-type); facilitates the maturation and cell surface expression of HAVCR2 thereby regulating T-cell tolerance induction. Isoform 2 interacts (via the cytoplasmic domain) with ANXA2; this interaction is regulated by phosphorylation and appears in the AIIt complex. Interacts (via Lewis X moieties) with CD209 (via C-type lectin domain); this interaction is regulated by the glycosylation pattern of CEACAM1 on cell types and regulates contact between dendritic cells and neutrophils. In terms of processing, phosphorylated on serine and tyrosine. Isoform 1 is phosphorylated on tyrosine by Src family kinases like SRC and LCK and by receptor like CSF3R, EGFR and INSR upon stimulation. Phosphorylated at Ser-503; mediates activity. Phosphorylated at Tyr-488; regulates activity. Phosphorylated at Tyr-488 by EGFR and INSR upon stimulation; this phosphorylation is Ser-503-phosphorylation-dependent; mediates cellular internalization; increases interaction with FASN. Phosphorylated at Tyr-488 and Tyr-515 by LCK; mediates PTPN6 association and is regulated by homophilic ligation of CEACAM1 in the absence of T-cell activation. Phosphorylated at Tyr-515; mediates interaction with PTPN11. Phosphorylated on serine and threonine. Expressed in granulocytes, lymphocytes, granulocytes, B cells, and T-cells. Expressed in bone. Highly expressed in liver and femur. Highly expressed in neutrophils, and to a lesser extent inmonocytes, and macrophages. Slightly higher expressed in peripheral blood neutrophils (PBNs). Intestinal T-cells predominantly express isoform 2 while extraintestinal T-cells mainly express isoform 1. Expressed in small intestine and colon.

It is found in the cell membrane. The protein resides in the lateral cell membrane. It localises to the apical cell membrane. The protein localises to the basal cell membrane. Its subcellular location is the cell junction. It is found in the adherens junction. The protein resides in the cytoplasmic vesicle. It localises to the secretory vesicle. The protein localises to the cell projection. Its subcellular location is the microvillus membrane. Its function is as follows. Cell adhesion protein that mediates homophilic cell adhesion in a calcium-independent manner. Plays a role as coinhibitory receptor in immune response, insulin action and also functions as an activator during angiogenesis. Its coinhibitory receptor function is phosphorylation- and PTPN6 -dependent, which in turn, suppress signal transduction of associated receptors by dephosphorylation of their downstream effectors. Plays a role in immune response, of T-cells, natural killer (NK) and neutrophils. Upon TCR/CD3 complex stimulation, inhibits TCR-mediated cytotoxicity by blocking granule exocytosis by mediating homophilic binding to adjacent cells, allowing interaction with and phosphorylation by LCK and interaction with the TCR/CD3 complex which recruits PTPN6 resulting in dephosphorylation of CD247 and ZAP70. Also inhibits T-cell proliferation and cytokine production through inhibition of JNK cascade and plays a crucial role in regulating autoimmunity and anti-tumor immunity by inhibiting T-cell through its interaction with HAVCR2. Upon natural killer (NK) cells activation, inhibit KLRK1-mediated cytolysis of CEACAM1-bearing tumor cells by trans-homophilic interactions with CEACAM1 on the target cell and lead to cis-interaction between CEACAM1 and KLRK1, allowing PTPN6 recruitment and then VAV1 dephosphorylation. Upon neutrophils activation negatively regulates IL1B production by recruiting PTPN6 to a SYK-TLR4-CEACAM1 complex, that dephosphorylates SYK, reducing the production of reactive oxygen species (ROS) and lysosome disruption, which in turn, reduces the activity of the inflammasome. Down-regulates neutrophil production by acting as a coinhibitory receptor for CSF3R by downregulating the CSF3R-STAT3 pathway through recruitment of PTPN6 that dephosphorylates CSF3R. Also regulates insulin action by promoting INS clearance and regulating lipogenesis in liver through regulating insulin signaling. Upon INS stimulation, undergoes phosphorylation by INSR leading to INS clearance by increasing receptor-mediated insulin endocytosis. This inernalization promotes interaction with FASN leading to receptor-mediated insulin degradation and to reduction of FASN activity leading to negative regulation of fatty acid synthesis. INSR-mediated phosphorylation also provokes a down-regulation of cell proliferation through SHC1 interaction resulting in decrease coupling of SHC1 to the MAPK3/ERK1-MAPK1/ERK2 and phosphatidylinositol 3-kinase pathways. Functions as activator in angiogenesis by promoting blood vessel remodeling through endothelial cell differentiation and migration and in arteriogenesis by increasing the number of collateral arteries and collateral vessel calibers after ischemia. Also regulates vascular permeability through the VEGFR2 signaling pathway resulting in control of nitric oxide production. Down-regulates cell growth in response to EGF through its interaction with SHC1 that mediates interaction with EGFR resulting in decrease coupling of SHC1 to the MAPK3/ERK1-MAPK1/ERK2 pathway. Negatively regulates platelet aggregation by decreasing platelet adhesion on type I collagen through the GPVI-FcRgamma complex. Inhibits cell migration and cell scattering through interaction with FLNA; interferes with the interaction of FLNA with RALA. Mediates bile acid transport activity in a phosphorylation dependent manner. Negatively regulates osteoclastogenesis. In terms of biological role, cell adhesion protein that mediates homophilic cell adhesion in a calcium-independent manner. Promotes populations of T-cells regulating IgA production and secretion associated with control of the commensal microbiota and resistance to enteropathogens. Functionally, (Microbial infection) In case of murine coronavirus (MHV) infection, serves as receptor for MHV S1 spike glycoprotein. In Mus musculus (Mouse), this protein is Cell adhesion molecule CEACAM1.